Consider the following 351-residue polypeptide: Histidinol-phosphate aminotransferase (351 aa).

N6-(pyridoxal phosphate)lysine is present on Lys213.

It belongs to the class-II pyridoxal-phosphate-dependent aminotransferase family. Histidinol-phosphate aminotransferase subfamily. As to quaternary structure, homodimer. Pyridoxal 5'-phosphate is required as a cofactor.

It carries out the reaction L-histidinol phosphate + 2-oxoglutarate = 3-(imidazol-4-yl)-2-oxopropyl phosphate + L-glutamate. The catalysed reaction is L-histidine + 2-oxoglutarate = 3-(imidazol-5-yl)pyruvate + L-glutamate. It functions in the pathway amino-acid biosynthesis; L-histidine biosynthesis; L-histidine from 5-phospho-alpha-D-ribose 1-diphosphate: step 7/9. The protein is Histidinol-phosphate aminotransferase of Caldanaerobacter subterraneus subsp. tengcongensis (strain DSM 15242 / JCM 11007 / NBRC 100824 / MB4) (Thermoanaerobacter tengcongensis).